Here is a 202-residue protein sequence, read N- to C-terminus: Imidazoleglycerol-phosphate dehydratase (202 aa).

It belongs to the imidazoleglycerol-phosphate dehydratase family. In terms of assembly, homotrimer.

It carries out the reaction D-erythro-1-(imidazol-4-yl)glycerol 3-phosphate = 3-(imidazol-4-yl)-2-oxopropyl phosphate + H2O. Its pathway is amino-acid biosynthesis; L-histidine biosynthesis; L-histidine from 5-phospho-alpha-D-ribose 1-diphosphate: step 6/9. This is Imidazoleglycerol-phosphate dehydratase (HIS3) from Cryptococcus neoformans var. neoformans serotype D (strain B-3501A) (Filobasidiella neoformans).